The following is a 246-amino-acid chain: Flavin-dependent thymidylate synthase (246 aa).

Residues Val17 to Asn241 form the ThyX domain. Residues Ser69, Arg92 to Arg94, and Glu101 each bind FAD. DUMP-binding positions include Glu89–Arg92, Glu101–Arg105, and Arg173. The short motif at Arg92 to Ser103 is the ThyX motif element. FAD-binding positions include Asn189–Arg191 and His195. Arg200 contacts dUMP. The active-site Involved in ionization of N3 of dUMP, leading to its activation is the Arg200.

This sequence belongs to the thymidylate synthase ThyX family. In terms of assembly, homotetramer. FAD serves as cofactor.

It catalyses the reaction dUMP + (6R)-5,10-methylene-5,6,7,8-tetrahydrofolate + NADPH + H(+) = dTMP + (6S)-5,6,7,8-tetrahydrofolate + NADP(+). The protein operates within pyrimidine metabolism; dTTP biosynthesis. In terms of biological role, catalyzes the reductive methylation of 2'-deoxyuridine-5'-monophosphate (dUMP) to 2'-deoxythymidine-5'-monophosphate (dTMP) while utilizing 5,10-methylenetetrahydrofolate (mTHF) as the methyl donor, and NADPH and FADH(2) as the reductant. This Streptomyces avermitilis (strain ATCC 31267 / DSM 46492 / JCM 5070 / NBRC 14893 / NCIMB 12804 / NRRL 8165 / MA-4680) protein is Flavin-dependent thymidylate synthase.